Consider the following 352-residue polypeptide: UDP-N-acetylglucosamine--N-acetylmuramyl-(pentapeptide) pyrophosphoryl-undecaprenol N-acetylglucosamine transferase (352 aa).

UDP-N-acetyl-alpha-D-glucosamine contacts are provided by S195 and Q287.

The protein belongs to the glycosyltransferase 28 family. MurG subfamily.

The protein localises to the cell membrane. It catalyses the reaction Mur2Ac(oyl-L-Ala-gamma-D-Glu-L-Lys-D-Ala-D-Ala)-di-trans,octa-cis-undecaprenyl diphosphate + UDP-N-acetyl-alpha-D-glucosamine = beta-D-GlcNAc-(1-&gt;4)-Mur2Ac(oyl-L-Ala-gamma-D-Glu-L-Lys-D-Ala-D-Ala)-di-trans,octa-cis-undecaprenyl diphosphate + UDP + H(+). Its pathway is cell wall biogenesis; peptidoglycan biosynthesis. Its function is as follows. Cell wall formation. Catalyzes the transfer of a GlcNAc subunit on undecaprenyl-pyrophosphoryl-MurNAc-pentapeptide (lipid intermediate I) to form undecaprenyl-pyrophosphoryl-MurNAc-(pentapeptide)GlcNAc (lipid intermediate II). In Streptococcus pneumoniae (strain ATCC BAA-255 / R6), this protein is UDP-N-acetylglucosamine--N-acetylmuramyl-(pentapeptide) pyrophosphoryl-undecaprenol N-acetylglucosamine transferase.